Here is a 136-residue protein sequence, read N- to C-terminus: Small ribosomal subunit protein uS19 (136 aa).

This sequence belongs to the universal ribosomal protein uS19 family.

Protein S19 forms a complex with S13 that binds strongly to the 16S ribosomal RNA. This chain is Small ribosomal subunit protein uS19, found in Methanosarcina mazei (strain ATCC BAA-159 / DSM 3647 / Goe1 / Go1 / JCM 11833 / OCM 88) (Methanosarcina frisia).